A 93-amino-acid chain; its full sequence is Small ribosomal subunit protein uS19 (93 aa).

It belongs to the universal ribosomal protein uS19 family.

Its function is as follows. Protein S19 forms a complex with S13 that binds strongly to the 16S ribosomal RNA. The protein is Small ribosomal subunit protein uS19 of Lacticaseibacillus paracasei (strain ATCC 334 / BCRC 17002 / CCUG 31169 / CIP 107868 / KCTC 3260 / NRRL B-441) (Lactobacillus paracasei).